Consider the following 484-residue polypeptide: Cobyric acid synthase (484 aa).

The region spanning 251–438 (ALKIAVPMLP…LHGLFGSDAY (188 aa)) is the GATase cobBQ-type domain. The Nucleophile role is filled by C333. Residue H430 is part of the active site.

The protein belongs to the CobB/CobQ family. CobQ subfamily.

Its pathway is cofactor biosynthesis; adenosylcobalamin biosynthesis. In terms of biological role, catalyzes amidations at positions B, D, E, and G on adenosylcobyrinic A,C-diamide. NH(2) groups are provided by glutamine, and one molecule of ATP is hydrogenolyzed for each amidation. This Rhizobium etli (strain ATCC 51251 / DSM 11541 / JCM 21823 / NBRC 15573 / CFN 42) protein is Cobyric acid synthase.